Consider the following 376-residue polypeptide: D-alanine--D-alanine ligase B (376 aa).

Positions 155-361 constitute an ATP-grasp domain; it reads KRLMRDAGLP…QTDLMDKLIA (207 aa). 184-239 provides a ligand contact to ATP; sequence AALGTPDLFVKPANLGSSVGVSRARSEEEFAASCALAFRYDRKILVEQALNGAREI. Positions 316, 328, and 330 each coordinate Mg(2+).

This sequence belongs to the D-alanine--D-alanine ligase family. Mg(2+) is required as a cofactor. It depends on Mn(2+) as a cofactor.

It is found in the cytoplasm. It catalyses the reaction 2 D-alanine + ATP = D-alanyl-D-alanine + ADP + phosphate + H(+). It functions in the pathway cell wall biogenesis; peptidoglycan biosynthesis. Cell wall formation. The polypeptide is D-alanine--D-alanine ligase B (Bradyrhizobium diazoefficiens (strain JCM 10833 / BCRC 13528 / IAM 13628 / NBRC 14792 / USDA 110)).